We begin with the raw amino-acid sequence, 638 residues long: 1-deoxy-D-xylulose-5-phosphate synthase (638 aa).

Residues His79 and 120-122 (AHS) each bind thiamine diphosphate. Residue Asp151 participates in Mg(2+) binding. Residues 152–153 (GA), Asn180, Tyr289, and Glu371 each bind thiamine diphosphate. A Mg(2+)-binding site is contributed by Asn180.

Belongs to the transketolase family. DXPS subfamily. As to quaternary structure, homodimer. Mg(2+) is required as a cofactor. Requires thiamine diphosphate as cofactor.

The catalysed reaction is D-glyceraldehyde 3-phosphate + pyruvate + H(+) = 1-deoxy-D-xylulose 5-phosphate + CO2. The protein operates within metabolic intermediate biosynthesis; 1-deoxy-D-xylulose 5-phosphate biosynthesis; 1-deoxy-D-xylulose 5-phosphate from D-glyceraldehyde 3-phosphate and pyruvate: step 1/1. In terms of biological role, catalyzes the acyloin condensation reaction between C atoms 2 and 3 of pyruvate and glyceraldehyde 3-phosphate to yield 1-deoxy-D-xylulose-5-phosphate (DXP). The sequence is that of 1-deoxy-D-xylulose-5-phosphate synthase from Rhizobium rhizogenes (strain K84 / ATCC BAA-868) (Agrobacterium radiobacter).